The following is a 510-amino-acid chain: NAD(P)H-quinone oxidoreductase subunit 2, chloroplastic (510 aa).

Transmembrane regions (helical) follow at residues 24-44, 59-79, 99-119, 124-144, 149-169, 183-203, 229-249, 295-315, 323-343, 347-367, 395-415, and 418-438; these read LLLFHGSFIFPECILIFGLIL, WFYFISSTSLVMSITALLFRW, IFQFLILLCSTLCIPLSVEYI, MAITEFLLFVLTATLGGMFLC, FITIFVAPECFSLCSYLLSGY, YLLMGGASSSILVHGFSWLYG, ISIALISITVGIGFKLSPAPF, WHLLLEILAILSMILGNLIAI, MLAYSSIGQIGYVIIGIIVGD, GYASMITYMLFYISMNLGTFA, ALSLALCLLSLGGLPPLAGFF, and LHLFWCGWQAGLYFLVSIGLL.

Belongs to the complex I subunit 2 family. In terms of assembly, NDH is composed of at least 16 different subunits, 5 of which are encoded in the nucleus.

The protein localises to the plastid. The protein resides in the chloroplast thylakoid membrane. The catalysed reaction is a plastoquinone + NADH + (n+1) H(+)(in) = a plastoquinol + NAD(+) + n H(+)(out). It carries out the reaction a plastoquinone + NADPH + (n+1) H(+)(in) = a plastoquinol + NADP(+) + n H(+)(out). In terms of biological role, NDH shuttles electrons from NAD(P)H:plastoquinone, via FMN and iron-sulfur (Fe-S) centers, to quinones in the photosynthetic chain and possibly in a chloroplast respiratory chain. The immediate electron acceptor for the enzyme in this species is believed to be plastoquinone. Couples the redox reaction to proton translocation, and thus conserves the redox energy in a proton gradient. In Phormium tenax (New Zealand flax), this protein is NAD(P)H-quinone oxidoreductase subunit 2, chloroplastic.